We begin with the raw amino-acid sequence, 308 residues long: Protein translocase subunit SecF (308 aa).

6 helical membrane passes run Ser28–Ile48, Ile140–Val160, Trp164–Phe184, Leu194–Ile214, Ile246–Ala266, and Val272–Ile292.

This sequence belongs to the SecD/SecF family. SecF subfamily. As to quaternary structure, forms a complex with SecD. Part of the essential Sec protein translocation apparatus which comprises SecA, SecYEG and auxiliary proteins SecDF-YajC and YidC.

Its subcellular location is the cell inner membrane. In terms of biological role, part of the Sec protein translocase complex. Interacts with the SecYEG preprotein conducting channel. SecDF uses the proton motive force (PMF) to complete protein translocation after the ATP-dependent function of SecA. In Rickettsia conorii (strain ATCC VR-613 / Malish 7), this protein is Protein translocase subunit SecF.